Consider the following 363-residue polypeptide: Cytoplasmic tRNA 2-thiolation protein 1 (363 aa).

The interval 337 to 363 (DGDCEQQATRSERNRSSLQGKHGNFDF) is disordered.

Belongs to the TtcA family. CTU1/NCS6/ATPBD3 subfamily.

The protein localises to the cytoplasm. It participates in tRNA modification; 5-methoxycarbonylmethyl-2-thiouridine-tRNA biosynthesis. Functionally, plays a central role in 2-thiolation of mcm(5)S(2)U at tRNA wobble positions of tRNA(Lys), tRNA(Glu) and tRNA(Gln). Directly binds tRNAs and probably acts by catalyzing adenylation of tRNAs, an intermediate required for 2-thiolation. It is unclear whether it acts as a sulfurtransferase that transfers sulfur from thiocarboxylated URM1 onto the uridine of tRNAs at wobble position. This Oryza sativa subsp. japonica (Rice) protein is Cytoplasmic tRNA 2-thiolation protein 1.